The primary structure comprises 144 residues: Transcription antitermination protein NusB (144 aa).

The protein belongs to the NusB family.

Functionally, involved in transcription antitermination. Required for transcription of ribosomal RNA (rRNA) genes. Binds specifically to the boxA antiterminator sequence of the ribosomal RNA (rrn) operons. The protein is Transcription antitermination protein NusB of Haemophilus influenzae (strain PittEE).